A 109-amino-acid polypeptide reads, in one-letter code: Small ribosomal subunit protein bS6 (109 aa).

This sequence belongs to the bacterial ribosomal protein bS6 family.

Binds together with bS18 to 16S ribosomal RNA. The polypeptide is Small ribosomal subunit protein bS6 (Ehrlichia chaffeensis (strain ATCC CRL-10679 / Arkansas)).